The following is a 622-amino-acid chain: UvrABC system protein C (622 aa).

Residues 13–92 (EKPGVYLMKN…IKKYRPKYNI (80 aa)) enclose the GIY-YIG domain. A UVR domain is found at 204–239 (KDILDKLKNQMEEASNSLQFEKAASLRDKIFAVKKI).

It belongs to the UvrC family. In terms of assembly, interacts with UvrB in an incision complex.

The protein resides in the cytoplasm. Functionally, the UvrABC repair system catalyzes the recognition and processing of DNA lesions. UvrC both incises the 5' and 3' sides of the lesion. The N-terminal half is responsible for the 3' incision and the C-terminal half is responsible for the 5' incision. This Clostridium tetani (strain Massachusetts / E88) protein is UvrABC system protein C.